The primary structure comprises 595 residues: MSNSAIPLNVVAVQEPRLELNNERTWVVVKGGQQVTYYPFPSTSFSSNQFNFICNPPSAQTVLDRLVFIQVPYDITFTANPSHAGITENLLQPGRDAFRAFPISSITNTLNATINGFPVNIELAQIIHALSRYHTPLKVKNGWMSMQPSFEDNYQSYRDADGANNNPLGVFTSAAGLSELPRGSYTMNVVTNTTTTARITGVLYEQVFLPPFLWDGEQAGGLANLTSLTFNWVLNNNLARIWSHSDITNDVSGNSTIGSMNISFQQPSMYLGFVTPRLNIPIPPRITYPYFKLSRYTTQFQNTLAPNASSTFKSNVVQLDSIPRKLYLFVKQSDNVIYQNLNNQITTPDVFLQINNLNLTWNNQQGILSGASSQNLYDFSVQNGYNKTWSEFNGVTQQFNGVSGQPTKVIGLEGGIVCLELGKDVGLRDDEAEGVIGNFNLQVQMTVTNTNQYVTVTPDMYIVAVYDGTLVISNTSAMASIGVASKEEVLNARITHGVSYNELQRIYGGDFFSSFKNFLGKVGNVAGKVNNFLKDSKIASSVLGAIPHPYAQVPGQILKNVGYGESHVGGGKKKGGVLIGGRQLTKAELRKELKM.

The protein resides in the virion. Functionally, may self assemble to form an icosahedral capsid. Most abundant protein in the virion. This chain is Putative capsid protein V20, found in Sputnik virophage.